We begin with the raw amino-acid sequence, 188 residues long: UPF0488 protein C8orf33 homolog (188 aa).

Disordered stretches follow at residues 1–65 (MAAP…AEAQ), 87–112 (QRPT…TPLP), and 144–182 (AHSA…RDEE). The residue at position 2 (Ala-2) is an N-acetylalanine. At Ser-41 the chain carries Phosphoserine. The segment covering 166–182 (PRPEGRSKGTSDTRDEE) has biased composition (basic and acidic residues).

It belongs to the UPF0488 family.

The chain is UPF0488 protein C8orf33 homolog from Bos taurus (Bovine).